We begin with the raw amino-acid sequence, 475 residues long: Ribonuclease Y (475 aa).

The interval 34 to 73 (EFERESRERRNELQRVERRLMQKEESLDKKSETLEQKDDR) is disordered. The KH domain maps to 165 to 228 (TVTVVQLPND…EVARIALEKL (64 aa)). The region spanning 291–384 (VLKHAIEVSH…VTAADAISAA (94 aa)) is the HD domain.

This sequence belongs to the RNase Y family.

Its function is as follows. Endoribonuclease that initiates mRNA decay. This chain is Ribonuclease Y, found in Alkaliphilus metalliredigens (strain QYMF).